The primary structure comprises 405 residues: Serine/threonine-protein kinase SSN3 (405 aa).

The Protein kinase domain occupies 40-350 (YEIIGYIAAG…ANDALLHPYF (311 aa)). ATP contacts are provided by residues 46-54 (IAAGTYGRV) and K71. D173 functions as the Proton acceptor in the catalytic mechanism. Positions 377–405 (DSDIKTMTYQGTKRGSQGGDNLHPRKKQK) are disordered. Residues 381-391 (KTMTYQGTKRG) show a composition bias toward polar residues.

It belongs to the protein kinase superfamily. CMGC Ser/Thr protein kinase family. CDC2/CDKX subfamily. Component of the srb8-11 complex, a regulatory module of the Mediator complex. It depends on Mg(2+) as a cofactor.

The protein resides in the nucleus. The catalysed reaction is L-seryl-[protein] + ATP = O-phospho-L-seryl-[protein] + ADP + H(+). The enzyme catalyses L-threonyl-[protein] + ATP = O-phospho-L-threonyl-[protein] + ADP + H(+). It catalyses the reaction [DNA-directed RNA polymerase] + ATP = phospho-[DNA-directed RNA polymerase] + ADP + H(+). Its function is as follows. Component of the srb8-11 complex. The srb8-11 complex is a regulatory module of the Mediator complex which is itself dependent transcription. The srb8-11 complex may be involved in the transcriptional repression of a subset of genes regulated by Mediator. It may inhibit the association of the Mediator complex with RNA polymerase II to form the holoenzyme complex. The srb8-11 complex phosphorylates the C-terminal domain (CTD) of the largest subunit of RNA polymerase II. This is Serine/threonine-protein kinase SSN3 (SSN3) from Yarrowia lipolytica (strain CLIB 122 / E 150) (Yeast).